The following is a 515-amino-acid chain: Maturase K (515 aa).

It belongs to the intron maturase 2 family. MatK subfamily.

The protein resides in the plastid. It is found in the chloroplast. Functionally, usually encoded in the trnK tRNA gene intron. Probably assists in splicing its own and other chloroplast group II introns. The polypeptide is Maturase K (Cedrus deodara (Deodar cedar)).